Consider the following 339-residue polypeptide: Dual specificity protein phosphatase 12 (339 aa).

Position 1 is an N-acetylmethionine (Met-1). The tract at residues 1–25 (MLEAQGSNHGCERQAPTASPASSAG) is disordered. The Tyrosine-protein phosphatase domain maps to 26-170 (HAVEVRPGLY…LKLYEAMGYE (145 aa)). Residue Cys-114 is the Phosphocysteine intermediate of the active site. 115 to 120 (HAGVSR) is a binding site for substrate. A Phosphoserine modification is found at Ser-334.

It belongs to the protein-tyrosine phosphatase family. Non-receptor class dual specificity subfamily. As to quaternary structure, monomer. Zn(2+) is required as a cofactor.

The protein resides in the nucleus. Its subcellular location is the cytoplasm. It is found in the cytosol. The catalysed reaction is O-phospho-L-tyrosyl-[protein] + H2O = L-tyrosyl-[protein] + phosphate. The enzyme catalyses O-phospho-L-seryl-[protein] + H2O = L-seryl-[protein] + phosphate. It carries out the reaction O-phospho-L-threonyl-[protein] + H2O = L-threonyl-[protein] + phosphate. Its function is as follows. Dual specificity phosphatase; can dephosphorylate both phosphotyrosine and phosphoserine or phosphothreonine residues. Can dephosphorylate glucokinase (in vitro). Has phosphatase activity with the synthetic substrate 6,8-difluoro-4-methylumbelliferyl phosphate and other in vitro substrates. This Mus musculus (Mouse) protein is Dual specificity protein phosphatase 12 (Dusp12).